We begin with the raw amino-acid sequence, 409 residues long: Autotransproter heptosyltransferase BAHTCr (409 aa).

The ADP-D-glycero-beta-D-manno-heptose site is built by T107, L108, and G109. D110 acts as the Proton acceptor in catalysis. ADP-D-glycero-beta-D-manno-heptose contacts are provided by Q224, T226, K230, R257, G302, and E326. Positions 339, 342, 358, and 370 each coordinate Fe(3+).

Belongs to the glycosyltransferase 9 family. In terms of assembly, homododecamer composed of 6 homodimers forming a ring. The cofactor is Fe(3+).

It is found in the cytoplasm. The enzyme catalyses ADP-D-glycero-beta-D-manno-heptose + L-seryl-[protein] = O-(D-glycero-alpha-D-manno-heptosyl)-L-seryl-[protein] + ADP + H(+). It carries out the reaction ADP-L-glycero-beta-D-manno-heptose + L-seryl-[protein] = O-(L-glycero-alpha-D-manno-heptosyl)-L-seryl-[protein] + ADP + H(+). In terms of biological role, glycosylates autotransporter CARC. By glycosylating CARC, involved in the colonization of the mouse host gastrointestinal tract. This is Autotransproter heptosyltransferase BAHTCr from Citrobacter rodentium (strain ICC168) (Citrobacter freundii biotype 4280).